The following is a 474-amino-acid chain: MNFQTTIGLEVHVELKTNSKIYSPSPVEYGDQPNANTNVIDWGYPGVLPSLNKGVVRDGIMAGLALHAQIAHHMHFDRKNYFYPDNPKAYQITQSDTPIAHDGWIEIEVNGKKKKIGIKEMHIEEDAGKNTHTSKYSYVDLNRQGTPLIEIVSKPDIASPEEAVAYLEALRQRIQFTGISDVKMEEGSMRVDTNISIRPIGSDKFGTKTEMKNINSFNYVRKALAFEEKRHQKVLMAGGHIGQETRRYDEATGETILMRTKEGSDDYRYFPEPDLPPVNVSDEWISEIESEMPEMPGERREHYVKDLGLTDYDAMVLTQTKEMSDFFEEAVKDGGDPKRVANYLMNDVNSYLNDKQVDLQDTKLTPSNLAGMVKLIEDGTISSKMAKKVFKGILDGEEPNAYAKEHGLVQLSDPAQLQPIVDEVLDNNEQSIEDFKNGKDRAVGYLMGQIMKQTRGKANPQVVTQLLMKSLKAK.

The protein belongs to the GatB/GatE family. GatB subfamily. In terms of assembly, heterotrimer of A, B and C subunits.

It carries out the reaction L-glutamyl-tRNA(Gln) + L-glutamine + ATP + H2O = L-glutaminyl-tRNA(Gln) + L-glutamate + ADP + phosphate + H(+). It catalyses the reaction L-aspartyl-tRNA(Asn) + L-glutamine + ATP + H2O = L-asparaginyl-tRNA(Asn) + L-glutamate + ADP + phosphate + 2 H(+). In terms of biological role, allows the formation of correctly charged Asn-tRNA(Asn) or Gln-tRNA(Gln) through the transamidation of misacylated Asp-tRNA(Asn) or Glu-tRNA(Gln) in organisms which lack either or both of asparaginyl-tRNA or glutaminyl-tRNA synthetases. The reaction takes place in the presence of glutamine and ATP through an activated phospho-Asp-tRNA(Asn) or phospho-Glu-tRNA(Gln). In Limosilactobacillus reuteri (strain DSM 20016) (Lactobacillus reuteri), this protein is Aspartyl/glutamyl-tRNA(Asn/Gln) amidotransferase subunit B.